The primary structure comprises 1316 residues: DNA-directed RNA polymerase subunit beta' (1316 aa).

The Zn(2+) site is built by C60, C62, C75, and C78. 3 residues coordinate Mg(2+): D535, D537, and D539. Residues C891, C968, C975, and C978 each coordinate Zn(2+).

The protein belongs to the RNA polymerase beta' chain family. In terms of assembly, the RNAP catalytic core consists of 2 alpha, 1 beta, 1 beta' and 1 omega subunit. When a sigma factor is associated with the core the holoenzyme is formed, which can initiate transcription. Mg(2+) is required as a cofactor. It depends on Zn(2+) as a cofactor.

The enzyme catalyses RNA(n) + a ribonucleoside 5'-triphosphate = RNA(n+1) + diphosphate. Functionally, DNA-dependent RNA polymerase catalyzes the transcription of DNA into RNA using the four ribonucleoside triphosphates as substrates. This is DNA-directed RNA polymerase subunit beta' from Mycolicibacterium paratuberculosis (strain ATCC BAA-968 / K-10) (Mycobacterium paratuberculosis).